Reading from the N-terminus, the 286-residue chain is Flagellin FlaB1 (286 aa).

Positions 231–286 (LDIAAENLQAAESRIRDANIAKQMVEYTKNQVLTQSGTAMLAQANTSAQSILSILR) are required for interaction with FliW.

Belongs to the bacterial flagellin family. As to quaternary structure, the flagellum consists of an outer layer composed of repeating units of FlaA around a core that contains several antigenically related polypeptides. Interacts via its C-terminus with FliW; a synthetic peptide of residues 229-247 partially blocks binding to FliW.

Its subcellular location is the periplasmic flagellum. The protein resides in the periplasm. In terms of biological role, component of the core of the flagella. The protein is Flagellin FlaB1 (flaB1) of Treponema pallidum (strain Nichols).